Reading from the N-terminus, the 215-residue chain is UPF0502 protein YceH (215 aa).

It belongs to the UPF0502 family.

The chain is UPF0502 protein YceH from Salmonella paratyphi B (strain ATCC BAA-1250 / SPB7).